We begin with the raw amino-acid sequence, 537 residues long: Glutamyl-tRNA reductase, chloroplastic (537 aa).

The transit peptide at 1–48 (MMASTTSATAAGGAFAAAKTRAGSSAAGGGACARVAAGGRRRSGVVVR) directs the protein to the chloroplast. Residues 134–137 (TCNR), Ser-194, 199–201 (EGQ), and Gln-205 each bind substrate. The Nucleophile role is filled by Cys-135. NADP(+) is bound at residue 276 to 281 (GAGKMG).

It belongs to the glutamyl-tRNA reductase family.

The protein localises to the plastid. The protein resides in the chloroplast. The catalysed reaction is (S)-4-amino-5-oxopentanoate + tRNA(Glu) + NADP(+) = L-glutamyl-tRNA(Glu) + NADPH + H(+). It participates in porphyrin-containing compound metabolism; protoporphyrin-IX biosynthesis; 5-aminolevulinate from L-glutamyl-tRNA(Glu): step 1/2. Catalyzes the NADPH-dependent reduction of glutamyl-tRNA(Glu) to glutamate 1-semialdehyde (GSA). In Oryza sativa subsp. japonica (Rice), this protein is Glutamyl-tRNA reductase, chloroplastic.